We begin with the raw amino-acid sequence, 419 residues long: UDP-N-acetylglucosamine 1-carboxyvinyltransferase (419 aa).

Position 22 to 23 (22 to 23 (KN)) interacts with phosphoenolpyruvate. A UDP-N-acetyl-alpha-D-glucosamine-binding site is contributed by Arg-91. The active-site Proton donor is Cys-115. A 2-(S-cysteinyl)pyruvic acid O-phosphothioketal modification is found at Cys-115. Residues 120–124 (RPVDL), 160–163 (KVSV), Asp-305, and Val-327 contribute to the UDP-N-acetyl-alpha-D-glucosamine site.

Belongs to the EPSP synthase family. MurA subfamily.

Its subcellular location is the cytoplasm. The enzyme catalyses phosphoenolpyruvate + UDP-N-acetyl-alpha-D-glucosamine = UDP-N-acetyl-3-O-(1-carboxyvinyl)-alpha-D-glucosamine + phosphate. Its pathway is cell wall biogenesis; peptidoglycan biosynthesis. Cell wall formation. Adds enolpyruvyl to UDP-N-acetylglucosamine. The polypeptide is UDP-N-acetylglucosamine 1-carboxyvinyltransferase (Shigella sonnei (strain Ss046)).